The primary structure comprises 190 residues: Calcium-binding protein NCS-1 (190 aa).

Glycine 2 carries the N-myristoyl glycine lipid modification. EF-hand domains follow at residues 40–58, 60–95, 96–131, and 144–179; these read SGHL…FFPF, DPSA…TSRG, ELND…IYKM, and TPEK…DPTI. Ca(2+) is bound by residues aspartate 73, aspartate 75, asparagine 77, tyrosine 79, glutamate 84, aspartate 109, aspartate 111, asparagine 113, glutamate 120, aspartate 157, asparagine 159, aspartate 161, glutamine 163, and glutamate 168.

It belongs to the recoverin family.

The protein resides in the membrane. Negatively regulates sporulation perhaps by controlling Ca(2+)-dependent desensitization of git3. This Schizosaccharomyces pombe (strain 972 / ATCC 24843) (Fission yeast) protein is Calcium-binding protein NCS-1 (ncs1).